Here is a 284-residue protein sequence, read N- to C-terminus: Acetyl-coenzyme A carboxylase carboxyl transferase subunit beta (284 aa).

The CoA carboxyltransferase N-terminal domain maps to 25 to 284 (MWVKCPGCSA…ILGILYRPAA (260 aa)). The Zn(2+) site is built by Cys-29, Cys-32, Cys-48, and Cys-51. The C4-type zinc finger occupies 29–51 (CPGCSATLLAKDLDANLNVCPTC).

This sequence belongs to the AccD/PCCB family. As to quaternary structure, acetyl-CoA carboxylase is a heterohexamer composed of biotin carboxyl carrier protein (AccB), biotin carboxylase (AccC) and two subunits each of ACCase subunit alpha (AccA) and ACCase subunit beta (AccD). The cofactor is Zn(2+).

The protein resides in the cytoplasm. The catalysed reaction is N(6)-carboxybiotinyl-L-lysyl-[protein] + acetyl-CoA = N(6)-biotinyl-L-lysyl-[protein] + malonyl-CoA. It functions in the pathway lipid metabolism; malonyl-CoA biosynthesis; malonyl-CoA from acetyl-CoA: step 1/1. Component of the acetyl coenzyme A carboxylase (ACC) complex. Biotin carboxylase (BC) catalyzes the carboxylation of biotin on its carrier protein (BCCP) and then the CO(2) group is transferred by the transcarboxylase to acetyl-CoA to form malonyl-CoA. This chain is Acetyl-coenzyme A carboxylase carboxyl transferase subunit beta, found in Pelobacter propionicus (strain DSM 2379 / NBRC 103807 / OttBd1).